Consider the following 238-residue polypeptide: MILYPAIDLKDGNAVRLLRGEMSDATVFNTDPAAQARAFQDAGCDWLHLVDLNGAFAGEPVNGAAVEAILAATSVPTQLGGGIRDMATIEGWLTRGIARVILGTVAVEDPDLVRQAARAFPGQVAVGIDARKGRVATKGWAEETDVMVTDLARAFEDAGVAAIIYTDIDRDGAMGGPNVSATADLARATSIPVIASGGVSSLDDLHALKTTGVISGAISGRALYDGALDLSEALHALA.

Residue D8 is the Proton acceptor of the active site. The active-site Proton donor is the D129.

Belongs to the HisA/HisF family.

It localises to the cytoplasm. It carries out the reaction 1-(5-phospho-beta-D-ribosyl)-5-[(5-phospho-beta-D-ribosylamino)methylideneamino]imidazole-4-carboxamide = 5-[(5-phospho-1-deoxy-D-ribulos-1-ylimino)methylamino]-1-(5-phospho-beta-D-ribosyl)imidazole-4-carboxamide. Its pathway is amino-acid biosynthesis; L-histidine biosynthesis; L-histidine from 5-phospho-alpha-D-ribose 1-diphosphate: step 4/9. The polypeptide is 1-(5-phosphoribosyl)-5-[(5-phosphoribosylamino)methylideneamino] imidazole-4-carboxamide isomerase (Jannaschia sp. (strain CCS1)).